Here is a 289-residue protein sequence, read N- to C-terminus: CBY1-interacting BAR domain-containing protein 1 (289 aa).

The transit peptide at 1–47 directs the protein to the mitochondrion; sequence MMRRTLENRNAQTKQLQTAVSNVEKHFGELCQIFAAYVRKTARLRDK. The interval 10–220 is BAR-like; sequence NAQTKQLQTA…NIDEDEDLEV (211 aa). Residues 107–178 adopt a coiled-coil conformation; the sequence is KMKRDDLKAT…INNFERQKMK (72 aa). The disordered stretch occupies residues 265–289; sequence LRKDQQAEDDEDDELDVTEEENFLK. Positions 271-289 are enriched in acidic residues; that stretch reads AEDDEDDELDVTEEENFLK.

This sequence belongs to the CIBAR family. As to quaternary structure, homodimer (via BAR-like domain). Heterodimer with FAM92B (via BAR-like domains). Interacts (via BAR-like domain) with CBY1; this interaction is required for targeting FAM92A to centriole and cilium basal body. Interacts (via BAR-like domain) with CBY3; both proteins form a ninefold symmetric structure at the flagellar base; are recruited to the annulus in a mutually dependent manner and regulate annulus positionning.

Its subcellular location is the cytoplasm. It is found in the cytoskeleton. The protein resides in the microtubule organizing center. The protein localises to the centrosome. It localises to the centriole. Its subcellular location is the cilium basal body. It is found in the cell projection. The protein resides in the cilium. The protein localises to the nucleus. It localises to the mitochondrion inner membrane. Its subcellular location is the flagellum. Plays a critical role in regulating mitochondrial ultrastructure and function by maintaining the integrity of mitochondrial morphology, particularly the organization of cristae. Preferentially binds to negatively charged phospholipids like cardiolipin and phosphatidylinositol 4,5-bisphosphate enhancing its interaction with mitochondrial membranes. Induces membrane curvature and tubulation, which are critical for maintaining mitochondrial ultrastructure and the organization of cristae. Plays a crucial role in ciliogenesis. May play a role in limb development through its role in ciliogenesis. Plays a key role in the correct positioning of the annulus, a septin-based ring structure in the sperm flagellum, serving both as a physical barrier and a membrane diffusion barrier that separates the midpiece (MP) from the principal piece (PP). This positioning is essential for proper sperm motility and function. Interacts with CBY3 to form a complex which localizes to the curved membrane region of the flagellar pocket. By doing so, may provide stability and rigidity to the periannular membrane to prevent membrane deformation. This function is crucial for halting annulus migration at the proximal end of the fibrous sheath-containing PP. This is CBY1-interacting BAR domain-containing protein 1 from Homo sapiens (Human).